The chain runs to 205 residues: Small ribosomal subunit protein uS7 (205 aa).

It belongs to the universal ribosomal protein uS7 family. In terms of assembly, part of the 30S ribosomal subunit.

Functionally, one of the primary rRNA binding proteins, it binds directly to 16S rRNA where it nucleates assembly of the head domain of the 30S subunit. Is located at the subunit interface close to the decoding center. The sequence is that of Small ribosomal subunit protein uS7 from Aeropyrum pernix (strain ATCC 700893 / DSM 11879 / JCM 9820 / NBRC 100138 / K1).